The sequence spans 508 residues: Maturase K (508 aa).

The protein belongs to the intron maturase 2 family. MatK subfamily.

It is found in the plastid. It localises to the chloroplast. In terms of biological role, usually encoded in the trnK tRNA gene intron. Probably assists in splicing its own and other chloroplast group II introns. This chain is Maturase K, found in Ranunculus glacialis (Glacier buttercup).